We begin with the raw amino-acid sequence, 288 residues long: Homoserine kinase (288 aa).

78 to 88 serves as a coordination point for ATP; that stretch reads PLARGLGSSSS.

This sequence belongs to the GHMP kinase family. Homoserine kinase subfamily.

The protein resides in the cytoplasm. It catalyses the reaction L-homoserine + ATP = O-phospho-L-homoserine + ADP + H(+). Its pathway is amino-acid biosynthesis; L-threonine biosynthesis; L-threonine from L-aspartate: step 4/5. Functionally, catalyzes the ATP-dependent phosphorylation of L-homoserine to L-homoserine phosphate. This is Homoserine kinase from Streptococcus agalactiae serotype III (strain NEM316).